The following is a 286-amino-acid chain: Sulfate transport system permease protein CysW (286 aa).

6 helical membrane passes run 20 to 40, 74 to 94, 108 to 128, 145 to 165, 207 to 227, and 255 to 275; these read LLPL…IIIP, LMGV…AFAI, VIDL…VLLY, IIFA…PFVA, LYGV…VSVV, and YTAA…KALL. In terms of domain architecture, ABC transmembrane type-1 spans 69 to 272; the sequence is IRLTLLMGVI…GISLVTLVLK (204 aa).

This sequence belongs to the binding-protein-dependent transport system permease family. CysTW subfamily. As to quaternary structure, the complex is composed of two ATP-binding proteins (CysA), two transmembrane proteins (CysT and CysW) and a solute-binding protein (CysP).

Its subcellular location is the cell inner membrane. Its function is as follows. Part of the ABC transporter complex CysAWTP (TC 3.A.1.6.1) involved in sulfate/thiosulfate import. Probably responsible for the translocation of the substrate across the membrane. This Synechococcus elongatus (strain ATCC 33912 / PCC 7942 / FACHB-805) (Anacystis nidulans R2) protein is Sulfate transport system permease protein CysW (cysW).